A 421-amino-acid chain; its full sequence is MEF2-activating motif and SAP domain-containing transcriptional regulator (421 aa).

An MEF2-binding motif is present at residues 12–28 (IIRSKFRSVLQLRIHRR). Disordered regions lie at residues 104 to 156 (PPEQ…PPSH), 188 to 296 (KAML…ASLT), and 322 to 406 (DQVE…ADLS). Residues 165 to 199 (LEELTVSELRQQLRLRGLPVSGTKAMLLERMRGGT) form the SAP domain. Basic and acidic residues predominate over residues 191–214 (LLERMRGGTPPRERPKPRREDKEA). The transcription activation stretch occupies residues 208-421 (RREDKEAAAP…LLWELLPDPW (214 aa)). Polar residues predominate over residues 230-241 (RLPSTVKASATN). Over residues 260-292 (ASVPAPTPSPALAPTPTPAPVPAPAPAPFPTPP) the composition is skewed to pro residues. Residues 347-372 (SPDSEGFSSVFSSSLPSPTSSLSPSP) are compositionally biased toward low complexity.

In terms of assembly, interacts with MEF2C. As to expression, expressed in skeletal muscle, brain, placenta and spleen.

It localises to the nucleus. Transcriptional coactivator. Stimulates the transcriptional activity of MEF2C. Stimulates MYOD1 activity in part via MEF2, resulting in an enhancement of skeletal muscle differentiation. The sequence is that of MEF2-activating motif and SAP domain-containing transcriptional regulator (Mamstr) from Mus musculus (Mouse).